Consider the following 405-residue polypeptide: Argininosuccinate synthase (405 aa).

ATP contacts are provided by residues 13–21 and alanine 40; that span reads AYSGGLDTS. L-citrulline is bound by residues tyrosine 91 and serine 96. Glycine 121 is a binding site for ATP. Residues threonine 123, asparagine 127, and aspartate 128 each contribute to the L-aspartate site. Asparagine 127 contributes to the L-citrulline binding site. L-citrulline-binding residues include arginine 131, serine 182, serine 191, glutamate 267, and tyrosine 279.

This sequence belongs to the argininosuccinate synthase family. Type 1 subfamily. Homotetramer.

It localises to the cytoplasm. It carries out the reaction L-citrulline + L-aspartate + ATP = 2-(N(omega)-L-arginino)succinate + AMP + diphosphate + H(+). It functions in the pathway amino-acid biosynthesis; L-arginine biosynthesis; L-arginine from L-ornithine and carbamoyl phosphate: step 2/3. The chain is Argininosuccinate synthase from Rhizobium meliloti (strain 1021) (Ensifer meliloti).